The sequence spans 516 residues: Serine carboxypeptidase II-3 (516 aa).

Positions 1-20 (MKCTVVALVLLVAVQCLVLG) are cleaved as a signal peptide. Positions 21-77 (AGPAAAAKARRTRQGDYLNRLRGSPSSRASWESLAAVEEQTTTKAAGRPAPVAAAVE) are excised as a propeptide. Intrachain disulfides connect Cys-143–Cys-391, Cys-300–Cys-315, and Cys-339–Cys-359. N-linked (GlcNAc...) asparagine glycans are attached at residues Asn-194 and Asn-205. Ser-236 is a catalytic residue. An N-linked (GlcNAc...) asparagine glycan is attached at Asn-301. Residues 342 to 352 (EKLVTPPIAPS) constitute a propeptide, linker peptide. Asn-380 carries an N-linked (GlcNAc...) asparagine glycan. Catalysis depends on residues Asp-427 and His-484.

This sequence belongs to the peptidase S10 family. As to quaternary structure, carboxypeptidase II is a dimer, where each monomer is composed of two chains linked by a disulfide bond. In terms of processing, the linker peptide is endoproteolytically excised during enzyme maturation.

The enzyme catalyses Preferential release of a C-terminal arginine or lysine residue.. In Hordeum vulgare (Barley), this protein is Serine carboxypeptidase II-3 (CXP;2-3).